We begin with the raw amino-acid sequence, 218 residues long: Pyridoxal phosphate homeostasis protein (218 aa).

Lys-25 carries the N6-(pyridoxal phosphate)lysine modification.

This sequence belongs to the pyridoxal phosphate-binding protein YggS/PROSC family.

Pyridoxal 5'-phosphate (PLP)-binding protein, which is involved in PLP homeostasis. The chain is Pyridoxal phosphate homeostasis protein from Synechocystis sp. (strain ATCC 27184 / PCC 6803 / Kazusa).